The chain runs to 542 residues: Organic anion transporter 3 (542 aa).

The Cytoplasmic portion of the chain corresponds to 1–20 (MTFSEILDRVGSMGRFQFLH). Ser-4 bears the Phosphoserine mark. The chain crosses the membrane as a helical span at residues 21-41 (VAILGLPILNMANHNLLQIFT). Residues 42–123 (AATPVHHCRP…LVCNSNKLKE (82 aa)) lie on the Extracellular side of the membrane. A glycan (N-linked (GlcNAc...) asparagine) is linked at Asn-86. Residues 124 to 144 (MAQSIFMAGILIGGLVLGDLS) form a helical membrane-spanning segment. The Cytoplasmic portion of the chain corresponds to 145–154 (DRFGRRPILT). The helical transmembrane segment at 155–175 (CSYLLLAASGSGAAFSPTFPI) threads the bilayer. Tyr-176 is a topological domain (extracellular). The helical transmembrane segment at 177–197 (MVFRFLCGFGISGITLSTVIL) threads the bilayer. Over 198–212 (NVEWVPTRMRAIMST) the chain is Cytoplasmic. The chain crosses the membrane as a helical span at residues 213 to 233 (ALGYCYTFGQFILPGLAYAIP). Residues 234–236 (QWR) lie on the Extracellular side of the membrane. A helical membrane pass occupies residues 237 to 257 (WLQLTVSIPFFIFFLSSWWTP). Residues 258–327 (ESIRWLVLSG…FRIPMLRRMT (70 aa)) are Cytoplasmic-facing. A helical transmembrane segment spans residues 328-348 (FCLSLAWFATGFAYYSLAMGV). Topologically, residues 349–354 (EEFGVN) are extracellular. Residues 355–375 (LYILQIIFGGVDVPAKFITIL) traverse the membrane as a helical segment. Over 376 to 386 (SLSYLGRHTTQ) the chain is Cytoplasmic. The chain crosses the membrane as a helical span at residues 387–407 (AAALLLAGGAILALTFVPLDL). The Extracellular segment spans residues 408-471 (QTVRTVLAVF…LVKITGEVQP (64 aa)). Residues 472–492 (FIPNIIYGITALLGGSAAFFL) form a helical membrane-spanning segment. Over 493–542 (PETLNQPLPETIEDLENWSLRAKKPKQEPEVEKASQRIPLQPHGPGLGSS) the chain is Cytoplasmic. Residues 515–542 (KKPKQEPEVEKASQRIPLQPHGPGLGSS) form a disordered region. Positions 517–527 (PKQEPEVEKAS) are enriched in basic and acidic residues.

It belongs to the major facilitator (TC 2.A.1) superfamily. Organic cation transporter (TC 2.A.1.19) family.

It localises to the basolateral cell membrane. It catalyses the reaction estrone 3-sulfate(out) + glutarate(in) = estrone 3-sulfate(in) + glutarate(out). The enzyme catalyses estrone 3-sulfate(in) + 2-oxoglutarate(out) = estrone 3-sulfate(out) + 2-oxoglutarate(in). The catalysed reaction is glutarate(in) + 2-oxoglutarate(out) = glutarate(out) + 2-oxoglutarate(in). It carries out the reaction urate(in) + 2-oxoglutarate(out) = urate(out) + 2-oxoglutarate(in). It catalyses the reaction taurocholate(out) + glutarate(in) = taurocholate(in) + glutarate(out). The enzyme catalyses dehydroepiandrosterone 3-sulfate(out) + glutarate(in) = dehydroepiandrosterone 3-sulfate(in) + glutarate(out). The catalysed reaction is prostaglandin F2alpha(out) + glutarate(in) = prostaglandin F2alpha(in) + glutarate(out). It carries out the reaction prostaglandin F2alpha(out) + 2-oxoglutarate(in) = prostaglandin F2alpha(in) + 2-oxoglutarate(out). It catalyses the reaction (R)-carnitine(out) + 2-oxoglutarate(in) = (R)-carnitine(in) + 2-oxoglutarate(out). The enzyme catalyses glutarate(in) + (R)-carnitine(out) = glutarate(out) + (R)-carnitine(in). The catalysed reaction is prostaglandin E2(out) + 2-oxoglutarate(in) = prostaglandin E2(in) + 2-oxoglutarate(out). It carries out the reaction prostaglandin E2(out) + glutarate(in) = prostaglandin E2(in) + glutarate(out). It catalyses the reaction urate(in) + glutarate(out) = urate(out) + glutarate(in). The enzyme catalyses taurocholate(out) + 2-oxoglutarate(in) = taurocholate(in) + 2-oxoglutarate(out). The catalysed reaction is dehydroepiandrosterone 3-sulfate(out) + 2-oxoglutarate(in) = dehydroepiandrosterone 3-sulfate(in) + 2-oxoglutarate(out). It carries out the reaction kynurenate(out) + a dicarboxylate(in) = kynurenate(in) + a dicarboxylate(out). It catalyses the reaction (indol-3-yl)acetate(out) + a dicarboxylate(in) = (indol-3-yl)acetate(in) + a dicarboxylate(out). The enzyme catalyses indoxyl sulfate(out) + a dicarboxylate(in) = indoxyl sulfate(in) + a dicarboxylate(out). The catalysed reaction is N-benzoylglycine(out) + a dicarboxylate(in) = N-benzoylglycine(in) + a dicarboxylate(out). It carries out the reaction 3-carboxy-4-methyl-5-propyl-2-furanpropanoate(out) + a dicarboxylate(in) = 3-carboxy-4-methyl-5-propyl-2-furanpropanoate(in) + a dicarboxylate(out). It catalyses the reaction (6R)-L-erythro-5,6,7,8-tetrahydrobiopterin(out) + a dicarboxylate(in) = (6R)-L-erythro-5,6,7,8-tetrahydrobiopterin(in) + a dicarboxylate(out). The enzyme catalyses L-erythro-7,8-dihydrobiopterin(out) + a dicarboxylate(in) = L-erythro-7,8-dihydrobiopterin(in) + a dicarboxylate(out). The catalysed reaction is L-sepiapterin(out) + a dicarboxylate(in) = L-sepiapterin(in) + a dicarboxylate(out). Functions as an organic anion/dicarboxylate exchanger that couples organic anion uptake indirectly to the sodium gradient. Transports organic anions such as estrone 3-sulfate (E1S) and urate in exchange for dicarboxylates such as glutarate or ketoglutarate (2-oxoglutarate). Plays an important role in the excretion of endogenous and exogenous organic anions, especially from the kidney and the brain. E1S transport is pH- and chloride-dependent and may also involve E1S/cGMP exchange. Responsible for the transport of prostaglandin E2 (PGE2) and prostaglandin F2(alpha) (PGF2(alpha)) in the basolateral side of the renal tubule. Involved in the transport of neuroactive tryptophan metabolites kynurenate and xanthurenate. Functions as a biopterin transporters involved in the uptake and the secretion of coenzymes tetrahydrobiopterin (BH4), dihydrobiopterin (BH2) and sepiapterin to urine, thereby determining baseline levels of blood biopterins. May be involved in the basolateral transport of steviol, a metabolite of the popular sugar substitute stevioside. May participate in the detoxification/ renal excretion of drugs and xenobiotics, such as the histamine H(2)-receptor antagonists fexofenadine and cimetidine, the antibiotic benzylpenicillin (PCG), the anionic herbicide 2,4-dichloro-phenoxyacetate (2,4-D), the diagnostic agent p-aminohippurate (PAH), the antiviral acyclovir (ACV), and the mycotoxin ochratoxin (OTA), by transporting these exogenous organic anions across the cell membrane in exchange for dicarboxylates such as 2-oxoglutarate. Contributes to the renal uptake of potent uremic toxins (indoxyl sulfate (IS), indole acetate (IA), hippurate/N-benzoylglycine (HA) and 3-carboxy-4-methyl-5-propyl-2-furanpropionate (CMPF)), pravastatin, PCG, E1S and dehydroepiandrosterone sulfate (DHEAS), and is partly involved in the renal uptake of temocaprilat (an angiotensin-converting enzyme (ACE) inhibitor). May contribute to the release of cortisol in the adrenals. Involved in one of the detoxification systems on the choroid plexus (CP), removes substrates such as E1S or taurocholate (TC), PCG, 2,4-D and PAH, from the cerebrospinal fluid (CSF) to the blood for eventual excretion in urine and bile. Also contributes to the uptake of several other organic compounds such as the prostanoids prostaglandin E(2) and prostaglandin F(2-alpha), L-carnitine, and the therapeutic drugs allopurinol, 6-mercaptopurine (6-MP) and 5-fluorouracil (5-FU). Mediates the transport of PAH, PCG, and the statins pravastatin and pitavastatin, from the cerebrum into the blood circulation across the blood-brain barrier (BBB). In summary, plays a role in the efflux of drugs and xenobiotics, helping reduce their undesired toxicological effects on the body. This Pongo abelii (Sumatran orangutan) protein is Organic anion transporter 3 (SLC22A8).